A 324-amino-acid polypeptide reads, in one-letter code: Glyoxylate/hydroxypyruvate reductase B (324 aa).

Active-site residues include R237 and E266. H285 acts as the Proton donor in catalysis.

This sequence belongs to the D-isomer specific 2-hydroxyacid dehydrogenase family. GhrB subfamily. As to quaternary structure, homodimer.

Its subcellular location is the cytoplasm. It carries out the reaction glycolate + NADP(+) = glyoxylate + NADPH + H(+). The enzyme catalyses (R)-glycerate + NAD(+) = 3-hydroxypyruvate + NADH + H(+). The catalysed reaction is (R)-glycerate + NADP(+) = 3-hydroxypyruvate + NADPH + H(+). Functionally, catalyzes the NADPH-dependent reduction of glyoxylate and hydroxypyruvate into glycolate and glycerate, respectively. The polypeptide is Glyoxylate/hydroxypyruvate reductase B (Salmonella typhi).